Consider the following 137-residue polypeptide: NADH-quinone oxidoreductase subunit A (137 aa).

3 consecutive transmembrane segments (helical) span residues 12 to 32, 66 to 86, and 96 to 116; these read WGFAIFLLGVVGLCAFMLGVS, FYLVAMLFVIFDIEALFLFAW, and TGFVEALVFIAILLAGLVYLF.

This sequence belongs to the complex I subunit 3 family. NDH-1 is composed of 13 different subunits. Subunits NuoA, H, J, K, L, M, N constitute the membrane sector of the complex.

The protein localises to the cell inner membrane. The catalysed reaction is a quinone + NADH + 5 H(+)(in) = a quinol + NAD(+) + 4 H(+)(out). In terms of biological role, NDH-1 shuttles electrons from NADH, via FMN and iron-sulfur (Fe-S) centers, to quinones in the respiratory chain. The immediate electron acceptor for the enzyme in this species is believed to be ubiquinone. Couples the redox reaction to proton translocation (for every two electrons transferred, four hydrogen ions are translocated across the cytoplasmic membrane), and thus conserves the redox energy in a proton gradient. The sequence is that of NADH-quinone oxidoreductase subunit A from Pseudomonas fluorescens (strain Pf0-1).